We begin with the raw amino-acid sequence, 338 residues long: tRNA N6-adenosine threonylcarbamoyltransferase (338 aa).

Residues His-110 and His-114 each contribute to the Fe cation site. Substrate contacts are provided by residues 132 to 136, Asp-165, Gly-178, and Asn-274; that span reads ILSGG. Asp-298 contacts Fe cation.

It belongs to the KAE1 / TsaD family. It depends on Fe(2+) as a cofactor.

The protein resides in the cytoplasm. The enzyme catalyses L-threonylcarbamoyladenylate + adenosine(37) in tRNA = N(6)-L-threonylcarbamoyladenosine(37) in tRNA + AMP + H(+). In terms of biological role, required for the formation of a threonylcarbamoyl group on adenosine at position 37 (t(6)A37) in tRNAs that read codons beginning with adenine. Is involved in the transfer of the threonylcarbamoyl moiety of threonylcarbamoyl-AMP (TC-AMP) to the N6 group of A37, together with TsaE and TsaB. TsaD likely plays a direct catalytic role in this reaction. This is tRNA N6-adenosine threonylcarbamoyltransferase from Borrelia hermsii (strain HS1 / DAH).